Consider the following 157-residue polypeptide: SsrA-binding protein (157 aa).

It belongs to the SmpB family.

It localises to the cytoplasm. Functionally, required for rescue of stalled ribosomes mediated by trans-translation. Binds to transfer-messenger RNA (tmRNA), required for stable association of tmRNA with ribosomes. tmRNA and SmpB together mimic tRNA shape, replacing the anticodon stem-loop with SmpB. tmRNA is encoded by the ssrA gene; the 2 termini fold to resemble tRNA(Ala) and it encodes a 'tag peptide', a short internal open reading frame. During trans-translation Ala-aminoacylated tmRNA acts like a tRNA, entering the A-site of stalled ribosomes, displacing the stalled mRNA. The ribosome then switches to translate the ORF on the tmRNA; the nascent peptide is terminated with the 'tag peptide' encoded by the tmRNA and targeted for degradation. The ribosome is freed to recommence translation, which seems to be the essential function of trans-translation. The chain is SsrA-binding protein from Rhodococcus jostii (strain RHA1).